A 209-amino-acid chain; its full sequence is PF03932 family protein CutC (209 aa).

Belongs to the CutC family.

The protein resides in the cytoplasm. In terms of biological role, might participate in the control of copper homeostasis; data from other bacteria suggests it is not involved. This is PF03932 family protein CutC from Enterococcus faecalis (strain ATCC 700802 / V583).